The sequence spans 799 residues: Valine--tRNA ligase (799 aa).

Position 536 (lysine 536) interacts with ATP.

It belongs to the class-I aminoacyl-tRNA synthetase family. ValS type 2 subfamily.

The protein resides in the cytoplasm. The catalysed reaction is tRNA(Val) + L-valine + ATP = L-valyl-tRNA(Val) + AMP + diphosphate. Its function is as follows. Catalyzes the attachment of valine to tRNA(Val). As ValRS can inadvertently accommodate and process structurally similar amino acids such as threonine, to avoid such errors, it has a 'posttransfer' editing activity that hydrolyzes mischarged Thr-tRNA(Val) in a tRNA-dependent manner. The chain is Valine--tRNA ligase (valS) from Pyrobaculum aerophilum (strain ATCC 51768 / DSM 7523 / JCM 9630 / CIP 104966 / NBRC 100827 / IM2).